The sequence spans 191 residues: Fe/S biogenesis protein NfuA (191 aa).

2 residues coordinate [4Fe-4S] cluster: Cys-149 and Cys-152.

This sequence belongs to the NfuA family. Homodimer. It depends on [4Fe-4S] cluster as a cofactor.

Involved in iron-sulfur cluster biogenesis. Binds a 4Fe-4S cluster, can transfer this cluster to apoproteins, and thereby intervenes in the maturation of Fe/S proteins. Could also act as a scaffold/chaperone for damaged Fe/S proteins. The polypeptide is Fe/S biogenesis protein NfuA (Klebsiella pneumoniae (strain 342)).